Reading from the N-terminus, the 503-residue chain is Lysine--tRNA ligase (503 aa).

Glu-414 and Glu-421 together coordinate Mg(2+).

This sequence belongs to the class-II aminoacyl-tRNA synthetase family. As to quaternary structure, homodimer. Mg(2+) is required as a cofactor.

Its subcellular location is the cytoplasm. The enzyme catalyses tRNA(Lys) + L-lysine + ATP = L-lysyl-tRNA(Lys) + AMP + diphosphate. The polypeptide is Lysine--tRNA ligase (Neisseria meningitidis serogroup B (strain ATCC BAA-335 / MC58)).